The following is a 124-amino-acid chain: Ribonuclease pancreatic (124 aa).

The span at 1–13 shows a compositional bias: basic and acidic residues; sequence KESAAAKFERQHM. Residues 1-24 form a disordered region; that stretch reads KESAAAKFERQHMDPSMSSASSSN. Positions 7 and 10 each coordinate substrate. Residue histidine 12 is the Proton acceptor of the active site. Disulfide bonds link cysteine 26–cysteine 84, cysteine 40–cysteine 95, cysteine 58–cysteine 110, and cysteine 65–cysteine 72. Substrate is bound by residues 41–45, lysine 66, and arginine 85; that span reads KPVNT. Residue histidine 119 is the Proton donor of the active site.

This sequence belongs to the pancreatic ribonuclease family. As to quaternary structure, monomer. Interacts with and forms tight 1:1 complexes with RNH1. Dimerization of two such complexes may occur. Interaction with RNH1 inhibits this protein. As to expression, pancreas.

It localises to the secreted. The catalysed reaction is an [RNA] containing cytidine + H2O = an [RNA]-3'-cytidine-3'-phosphate + a 5'-hydroxy-ribonucleotide-3'-[RNA].. The enzyme catalyses an [RNA] containing uridine + H2O = an [RNA]-3'-uridine-3'-phosphate + a 5'-hydroxy-ribonucleotide-3'-[RNA].. Its function is as follows. Endonuclease that catalyzes the cleavage of RNA on the 3' side of pyrimidine nucleotides. Acts on single-stranded and double-stranded RNA. The chain is Ribonuclease pancreatic (RNASE1) from Dama dama (Fallow deer).